The primary structure comprises 178 residues: Inorganic pyrophosphatase (178 aa).

Substrate contacts are provided by Lys30, Arg44, and Tyr56. 3 residues coordinate Mg(2+): Asp66, Asp71, and Asp103. Tyr140 contacts substrate.

It belongs to the PPase family. In terms of assembly, homohexamer. Mg(2+) serves as cofactor.

The protein resides in the cytoplasm. It catalyses the reaction diphosphate + H2O = 2 phosphate + H(+). Functionally, catalyzes the hydrolysis of inorganic pyrophosphate (PPi) forming two phosphate ions. The chain is Inorganic pyrophosphatase from Pyrococcus abyssi (strain GE5 / Orsay).